The following is a 285-amino-acid chain: Ribosomal RNA small subunit methyltransferase I (285 aa).

The protein belongs to the methyltransferase superfamily. RsmI family.

Its subcellular location is the cytoplasm. It carries out the reaction cytidine(1402) in 16S rRNA + S-adenosyl-L-methionine = 2'-O-methylcytidine(1402) in 16S rRNA + S-adenosyl-L-homocysteine + H(+). Functionally, catalyzes the 2'-O-methylation of the ribose of cytidine 1402 (C1402) in 16S rRNA. In Mycobacterium tuberculosis (strain ATCC 25618 / H37Rv), this protein is Ribosomal RNA small subunit methyltransferase I.